The chain runs to 100 residues: Urease subunit gamma (100 aa).

This sequence belongs to the urease gamma subunit family. In terms of assembly, heterotrimer of UreA (gamma), UreB (beta) and UreC (alpha) subunits. Three heterotrimers associate to form the active enzyme.

Its subcellular location is the cytoplasm. The catalysed reaction is urea + 2 H2O + H(+) = hydrogencarbonate + 2 NH4(+). Its pathway is nitrogen metabolism; urea degradation; CO(2) and NH(3) from urea (urease route): step 1/1. In Methylobacillus flagellatus (strain ATCC 51484 / DSM 6875 / VKM B-1610 / KT), this protein is Urease subunit gamma.